We begin with the raw amino-acid sequence, 201 residues long: Cysteine dioxygenase type 1 (201 aa).

The Fe cation site is built by His86, His88, and His141. Residues 93-158 (CFLKLLQGQL…TEPAVSLHLY (66 aa)) constitute a cross-link (3'-(S-cysteinyl)-tyrosine (Cys-Tyr)).

It belongs to the cysteine dioxygenase family. Monomer. Fe cation serves as cofactor. The cofactor is Ni(2+). Zn(2+) is required as a cofactor. The thioether cross-link between Cys-93 and Tyr-158 plays a structural role through stabilizing the Fe(2+) ion, and prevents the production of highly damaging free hydroxyl radicals by holding the oxygen radical via hydroxyl hydrogen.

The enzyme catalyses L-cysteine + O2 = 3-sulfino-L-alanine + H(+). It functions in the pathway organosulfur biosynthesis; taurine biosynthesis; hypotaurine from L-cysteine: step 1/2. Functionally, catalyzes the oxidation of cysteine to cysteine sulfinic acid with addition of molecular dioxygen. In Danio rerio (Zebrafish), this protein is Cysteine dioxygenase type 1 (cdo1).